Consider the following 120-residue polypeptide: Ig heavy chain V region AC38 15.3 (120 aa).

Residues glutamine 1 to arginine 98 are v segment. Cysteine 22 and cysteine 96 form a disulfide bridge. Residues tryptophan 99–arginine 105 form a d segment region. A j segment region spans residues tyrosine 106–serine 120.

The sequence is that of Ig heavy chain V region AC38 15.3 from Mus musculus (Mouse).